Consider the following 146-residue polypeptide: Phospholipase A2 (146 aa).

A signal peptide spans 1 to 18 (MAFLVFAFLTLMAVETYG). Disulfide bonds link C44–C137, C46–C62, C61–C117, C67–C144, C68–C110, C77–C103, and C95–C108. 3 residues coordinate Ca(2+): Y45, G47, and G49. Residue H65 is part of the active site. D66 lines the Ca(2+) pocket. N85 is a glycosylation site (N-linked (GlcNAc...) asparagine). D111 is a catalytic residue. N126 carries N-linked (GlcNAc...) asparagine glycosylation.

Requires Ca(2+) as cofactor. In terms of processing, N-glycosylated. Glycosylated with mannose chains including Man2(GlcNAc), Man2(GlcNAc)2, Man2(GlcNAc)3, Man2(GlcNAc)4 and Man2(GlcNAc)5. In terms of tissue distribution, expressed by the skin glands (at protein level).

The protein resides in the secreted. It carries out the reaction a 1,2-diacyl-sn-glycero-3-phosphocholine + H2O = a 1-acyl-sn-glycero-3-phosphocholine + a fatty acid + H(+). Functionally, PLA2 catalyzes the calcium-dependent hydrolysis of the 2-acyl groups in 3-sn-phosphoglycerides. This chain is Phospholipase A2, found in Pithecopus azureus (Orange-legged monkey tree frog).